A 133-amino-acid polypeptide reads, in one-letter code: Small ribosomal subunit protein uS11 (133 aa).

The protein belongs to the universal ribosomal protein uS11 family. As to quaternary structure, part of the 30S ribosomal subunit. Interacts with proteins S7 and S18. Binds to IF-3.

Functionally, located on the platform of the 30S subunit, it bridges several disparate RNA helices of the 16S rRNA. Forms part of the Shine-Dalgarno cleft in the 70S ribosome. The sequence is that of Small ribosomal subunit protein uS11 from Methylibium petroleiphilum (strain ATCC BAA-1232 / LMG 22953 / PM1).